Consider the following 42-residue polypeptide: Photosystem I reaction center subunit IX (42 aa).

A helical transmembrane segment spans residues 7 to 27 (YLSTAPVLAAVWFGFLAGLLI).

The protein belongs to the PsaJ family.

The protein resides in the plastid. It localises to the chloroplast thylakoid membrane. Functionally, may help in the organization of the PsaE and PsaF subunits. The protein is Photosystem I reaction center subunit IX of Nephroselmis olivacea (Green alga).